Consider the following 231-residue polypeptide: Putative N-acetylmannosamine-6-phosphate 2-epimerase (231 aa).

This sequence belongs to the NanE family.

It carries out the reaction an N-acyl-D-glucosamine 6-phosphate = an N-acyl-D-mannosamine 6-phosphate. It functions in the pathway amino-sugar metabolism; N-acetylneuraminate degradation; D-fructose 6-phosphate from N-acetylneuraminate: step 3/5. Functionally, converts N-acetylmannosamine-6-phosphate (ManNAc-6-P) to N-acetylglucosamine-6-phosphate (GlcNAc-6-P). This is Putative N-acetylmannosamine-6-phosphate 2-epimerase from Listeria monocytogenes serotype 4b (strain F2365).